The sequence spans 273 residues: Dermonecrotic toxin (273 aa).

Mg(2+) contacts are provided by E20 and D22. The active-site Nucleophile is the H35. A disulfide bond links C39 and C45. D79 is a Mg(2+) binding site.

This sequence belongs to the arthropod phospholipase D family. Class I subfamily. The cofactor is Mg(2+). As to expression, expressed by the venom gland.

Its subcellular location is the secreted. It carries out the reaction an N-(acyl)-sphingosylphosphocholine = an N-(acyl)-sphingosyl-1,3-cyclic phosphate + choline. It catalyses the reaction an N-(acyl)-sphingosylphosphoethanolamine = an N-(acyl)-sphingosyl-1,3-cyclic phosphate + ethanolamine. The catalysed reaction is a 1-acyl-sn-glycero-3-phosphocholine = a 1-acyl-sn-glycero-2,3-cyclic phosphate + choline. The enzyme catalyses a 1-acyl-sn-glycero-3-phosphoethanolamine = a 1-acyl-sn-glycero-2,3-cyclic phosphate + ethanolamine. Functionally, dermonecrotic toxins cleave the phosphodiester linkage between the phosphate and headgroup of certain phospholipids (sphingolipid and lysolipid substrates), forming an alcohol (often choline) and a cyclic phosphate. This toxin acts on sphingomyelin (SM). It may also act on ceramide phosphoethanolamine (CPE), lysophosphatidylcholine (LPC) and lysophosphatidylethanolamine (LPE), but not on lysophosphatidylserine (LPS), and lysophosphatidylglycerol (LPG). It acts by transphosphatidylation, releasing exclusively cyclic phosphate products as second products. Induces dermonecrosis, hemolysis, increased vascular permeability, edema, inflammatory response, and platelet aggregation. This is Dermonecrotic toxin from Loxosceles laeta (South American recluse spider).